The primary structure comprises 412 residues: [Pyruvate dehydrogenase (acetyl-transferring)] kinase isozyme 4, mitochondrial (412 aa).

Positions 138 to 368 (ILEYKDTCTV…DAIIYLKALS (231 aa)) constitute a Histidine kinase domain. Residues 254-261 (ELFKNAMR), Asp293, 312-313 (ST), and 329-334 (GFGYGL) contribute to the ATP site.

This sequence belongs to the PDK/BCKDK protein kinase family. Homodimer. Interacts with the pyruvate dehydrogenase complex subunit DLAT, and is part of the multimeric pyruvate dehydrogenase complex that contains multiple copies of pyruvate dehydrogenase (E1), dihydrolipoamide acetyltransferase (DLAT, E2) and lipoamide dehydrogenase (DLD, E3). Detected in skeletal muscle and heart.

Its subcellular location is the mitochondrion matrix. The enzyme catalyses L-seryl-[pyruvate dehydrogenase E1 alpha subunit] + ATP = O-phospho-L-seryl-[pyruvate dehydrogenase E1 alpha subunit] + ADP + H(+). Functionally, kinase that plays a key role in regulation of glucose and fatty acid metabolism and homeostasis via phosphorylation of the pyruvate dehydrogenase subunits PDHA1 and PDHA2. This inhibits pyruvate dehydrogenase activity, and thereby regulates metabolite flux through the tricarboxylic acid cycle, down-regulates aerobic respiration and inhibits the formation of acetyl-coenzyme A from pyruvate. Inhibition of pyruvate dehydrogenase decreases glucose utilization and increases fat metabolism in response to prolonged fasting and starvation. Plays an important role in maintaining normal blood glucose levels under starvation, and is involved in the insulin signaling cascade. Via its regulation of pyruvate dehydrogenase activity, plays an important role in maintaining normal blood pH and in preventing the accumulation of ketone bodies under starvation. In the fed state, mediates cellular responses to glucose levels and to a high-fat diet. Regulates both fatty acid oxidation and de novo fatty acid biosynthesis. Plays a role in the generation of reactive oxygen species. Protects detached epithelial cells against anoikis. Plays a role in cell proliferation via its role in regulating carbohydrate and fatty acid metabolism. This chain is [Pyruvate dehydrogenase (acetyl-transferring)] kinase isozyme 4, mitochondrial (PDK4), found in Ictidomys tridecemlineatus (Thirteen-lined ground squirrel).